The primary structure comprises 327 residues: MAMTAEVKDELSRLVVNSVSARRAEVASLLRFAGGLHIVSGRVVVEAEVDLGIIARRLRKDIYDLYGYNAVVHVLSASGIRKSTRYVVRVAKDGEALARQTGLLDLRGRPVRGLPAQVVGGSVGDAEAAWRGAFLAHGSLTEPGRSSALEVSCPGPEAALALVGAARRLGVSAKAREVRGSDRVVVRDGEAIGALLTRMGAQDTRLTWEERRMRREVRATANRLANFDDANLRRSARAAVAAAARVERALQILGDTVPDHLAAAGNLRVAHRQASLEELGRLADPPMTKDAVAGRIRRLLSMADRKAKQDGIPDTESAVTPDLLEDA.

The H-T-H motif DNA-binding region spans 277–310; it reads EELGRLADPPMTKDAVAGRIRRLLSMADRKAKQD. Residues 304-327 are disordered; it reads DRKAKQDGIPDTESAVTPDLLEDA.

It belongs to the WhiA family.

Functionally, involved in cell division and chromosome segregation. In Mycolicibacterium vanbaalenii (strain DSM 7251 / JCM 13017 / BCRC 16820 / KCTC 9966 / NRRL B-24157 / PYR-1) (Mycobacterium vanbaalenii), this protein is Probable cell division protein WhiA.